The chain runs to 389 residues: Phosphoglycerate kinase (389 aa).

Substrate contacts are provided by residues 21 to 23 (DLN), arginine 36, 59 to 62 (HLGR), arginine 112, and arginine 145. Residues lysine 196, glutamate 313, and 342–345 (GGDT) each bind ATP.

Belongs to the phosphoglycerate kinase family. Monomer.

The protein localises to the cytoplasm. It catalyses the reaction (2R)-3-phosphoglycerate + ATP = (2R)-3-phospho-glyceroyl phosphate + ADP. It functions in the pathway carbohydrate degradation; glycolysis; pyruvate from D-glyceraldehyde 3-phosphate: step 2/5. In Mannheimia succiniciproducens (strain KCTC 0769BP / MBEL55E), this protein is Phosphoglycerate kinase.